Here is a 207-residue protein sequence, read N- to C-terminus: Guanylate kinase (207 aa).

The 179-residue stretch at 5–183 (GTLYIISAPS…ALYELEAIVE (179 aa)) folds into the Guanylate kinase-like domain. 12-19 (APSGAGKT) provides a ligand contact to ATP.

It belongs to the guanylate kinase family.

It localises to the cytoplasm. It catalyses the reaction GMP + ATP = GDP + ADP. Essential for recycling GMP and indirectly, cGMP. This chain is Guanylate kinase, found in Alcanivorax borkumensis (strain ATCC 700651 / DSM 11573 / NCIMB 13689 / SK2).